A 291-amino-acid chain; its full sequence is Lipoyl synthase (291 aa).

7 residues coordinate [4Fe-4S] cluster: Cys33, Cys38, Cys44, Cys59, Cys63, Cys66, and Ser274. Residues 45 to 263 (WGEGTATFLI…REAAEAMGFK (219 aa)) enclose the Radical SAM core domain.

It belongs to the radical SAM superfamily. Lipoyl synthase family. It depends on [4Fe-4S] cluster as a cofactor.

The protein resides in the cytoplasm. The catalysed reaction is [[Fe-S] cluster scaffold protein carrying a second [4Fe-4S](2+) cluster] + N(6)-octanoyl-L-lysyl-[protein] + 2 oxidized [2Fe-2S]-[ferredoxin] + 2 S-adenosyl-L-methionine + 4 H(+) = [[Fe-S] cluster scaffold protein] + N(6)-[(R)-dihydrolipoyl]-L-lysyl-[protein] + 4 Fe(3+) + 2 hydrogen sulfide + 2 5'-deoxyadenosine + 2 L-methionine + 2 reduced [2Fe-2S]-[ferredoxin]. It functions in the pathway protein modification; protein lipoylation via endogenous pathway; protein N(6)-(lipoyl)lysine from octanoyl-[acyl-carrier-protein]: step 2/2. Functionally, catalyzes the radical-mediated insertion of two sulfur atoms into the C-6 and C-8 positions of the octanoyl moiety bound to the lipoyl domains of lipoate-dependent enzymes, thereby converting the octanoylated domains into lipoylated derivatives. The chain is Lipoyl synthase from Pyrobaculum calidifontis (strain DSM 21063 / JCM 11548 / VA1).